We begin with the raw amino-acid sequence, 98 residues long: NADH-ubiquinone oxidoreductase chain 4L (98 aa).

3 helical membrane passes run 2–22, 28–48, and 61–81; these read PSIS…MLMF, SSLL…TLII, and IMLL…LVMV.

Belongs to the complex I subunit 4L family. As to quaternary structure, core subunit of respiratory chain NADH dehydrogenase (Complex I) which is composed of 45 different subunits.

It localises to the mitochondrion inner membrane. It carries out the reaction a ubiquinone + NADH + 5 H(+)(in) = a ubiquinol + NAD(+) + 4 H(+)(out). In terms of biological role, core subunit of the mitochondrial membrane respiratory chain NADH dehydrogenase (Complex I) which catalyzes electron transfer from NADH through the respiratory chain, using ubiquinone as an electron acceptor. Part of the enzyme membrane arm which is embedded in the lipid bilayer and involved in proton translocation. This chain is NADH-ubiquinone oxidoreductase chain 4L (MT-ND4L), found in Allocebus trichotis (Hairy-eared dwarf lemur).